Consider the following 490-residue polypeptide: Cytochrome P450 90D2 (490 aa).

Residues alanine 4–leucine 24 traverse the membrane as a helical segment. A heme-binding site is contributed by cysteine 437.

It belongs to the cytochrome P450 family. It depends on heme as a cofactor.

The protein localises to the membrane. It catalyses the reaction 6-deoxoteasterone + reduced [NADPH--hemoprotein reductase] + O2 = 3-dehydro-6-deoxoteasterone + oxidized [NADPH--hemoprotein reductase] + 2 H2O + H(+). It participates in plant hormone biosynthesis; brassinosteroid biosynthesis. Catalyzes the C6-oxidation step in brassinosteroids biosynthesis. May convert 6-deoxoteasterone (6-deoxoTE) to 3-dehydro-6-deoxoteasterone (6-deoxo3DT, 6-deoxo3DHT), and teasterone (TE) to 3-dehydroteasterone (3DT, 3-DHT). Involved in the elongation of leaf sheaths and stems. In Oryza sativa subsp. indica (Rice), this protein is Cytochrome P450 90D2.